The following is a 984-amino-acid chain: Mineralocorticoid receptor (984 aa).

Residues 1-602 are modulating; sequence METKGYHSLP…STGSSRPSKI (602 aa). The segment covering 231–243 has biased composition (polar residues); it reads QGTPLTCSPNVEN. Disordered stretches follow at residues 231–329 and 346–369; these read QGTP…AAST and SGTS…EKGA. Residues Ser-250, Ser-259, Ser-283, Ser-287, and Ser-299 each carry the phosphoserine modification. The segment covering 259–291 has biased composition (low complexity); that stretch reads SPLSSPLSSMKSSISSPPSHCSVKSPVSSPNNV. Positions 292 to 329 are enriched in polar residues; sequence TLRSSVSSPANINNSRCSVSSPSNTNNRSTLSSPAAST. The segment covering 346-355 has biased composition (low complexity); sequence SGTSAGSSTS. Zn(2+) contacts are provided by Cys-603, Cys-606, Cys-620, Cys-623, Cys-639, Cys-645, Cys-655, and Cys-658. NR C4-type zinc fingers lie at residues 603–623 and 639–663; these read CLVC…CGSC and CAGR…LQKC. Positions 603–668 form a DNA-binding region, nuclear receptor; it reads CLVCGDEASG…RLQKCLQAGM (66 aa). Residues 669–725 are hinge; the sequence is NLGARKSKKLGKLKGIHEEQPQQQQPPPPPPPPQSPEEGTTYIAPAKEPSVNTALVP. Positions 684–710 are disordered; that stretch reads IHEEQPQQQQPPPPPPPPQSPEEGTTY. The segment covering 692-703 has biased composition (pro residues); sequence QQPPPPPPPPQS. The region spanning 726–964 is the NR LBD domain; it reads QLSTISRALT…EFPAMLVEII (239 aa). Residues Asn-770 and Gln-776 each coordinate 21-hydroxyprogesterone. Residues Asn-770 and Gln-776 each coordinate aldosterone. Progesterone is bound by residues Asn-770 and Gln-776. The interval 782-785 is important for coactivator binding; sequence KWAK. 21-hydroxyprogesterone-binding residues include Arg-817 and Thr-945. Residues Arg-817 and Thr-945 each contribute to the aldosterone site. Progesterone-binding residues include Arg-817 and Thr-945.

It belongs to the nuclear hormone receptor family. NR3 subfamily. In terms of assembly, heteromultimeric cytoplasmic complex with HSP90, HSP70, and FKBP4, in the absence of ligand. After ligand binding, it translocates to the nucleus and binds to DNA as a homodimer and as a heterodimer with NR3C1. Binds the coactivator NCOA2. May interact with HSD11B2 in the absence of ligand. Binds the coactivators NCOA1, TIF1 and NRIP1. In terms of processing, phosphorylated.

Its subcellular location is the cytoplasm. The protein localises to the nucleus. It localises to the endoplasmic reticulum membrane. In terms of biological role, receptor for both mineralocorticoids (MC) such as aldosterone and glucocorticoids (GC) such as corticosterone or cortisol. Binds to mineralocorticoid response elements (MRE) and transactivates target genes. The effect of MC is to increase ion and water transport and thus raise extracellular fluid volume and blood pressure and lower potassium levels. The protein is Mineralocorticoid receptor (NR3C2) of Aotus nancymaae (Ma's night monkey).